The sequence spans 317 residues: MNRFGTRLVGATATTPPAPKARSNENLDKIDMSLDEIIKLNRKEGKKQSFPRLNRRLQQSGARQLRMRVRWGVQQSSGFGKTSVSRRGRVLPGKRRPYGVITGLAARKATGIRKGISPMNRPPLSDKNIERYFPALKRKTSLLRQNEVQRKPVAVLKRPNQLNRKNNIPANFTRSGNKLSHQKDTRQATFLFRRGLKVQTQLNTEQLIDDVVAKRTRQWRTSTTNGGILTVSIDNPGAVQCPVTQKPRLTRTAVPSFLTKREQSDVKKIPKGVPLQFDINSVGKQTGMTLNERFGILKEQRAALPFSKGGSRFVTVG.

An N-acetylmethionine modification is found at M1. Positions 1–23 (MNRFGTRLVGATATTPPAPKARS) are disordered. Position 14 is a phosphothreonine (T14). S23 bears the Phosphoserine mark. The UAP56-binding motif signature appears at 26-44 (NLDKIDMSLDEIIKLNRKE). Phosphoserine occurs at positions 60 and 117. K139 participates in a covalent cross-link: Glycyl lysine isopeptide (Lys-Gly) (interchain with G-Cter in SUMO1). K260 is covalently cross-linked (Glycyl lysine isopeptide (Lys-Gly) (interchain with G-Cter in SUMO2)).

It belongs to the UIF family. Interacts with DDX39B/UAP56 and NXF1; interaction with DDX39B/UAP56 and NXF1 are mutually exclusive. Interacts with SSRP1; required for its recruitment to mRNAs. Interacts with CHTOP.

The protein localises to the nucleus. It localises to the nucleoplasm. The protein resides in the nucleus speckle. Functionally, required for mRNA export from the nucleus to the cytoplasm. Acts as an adapter that uses the DDX39B/UAP56-NFX1 pathway to ensure efficient mRNA export and delivering to the nuclear pore. Associates with spliced and unspliced mRNAs simultaneously with ALYREF/THOC4. The polypeptide is UAP56-interacting factor (Fyttd1) (Rattus norvegicus (Rat)).